A 292-amino-acid polypeptide reads, in one-letter code: Ribonuclease T2-like (292 aa).

A signal peptide spans 1 to 23 (MAKTASAMLFLYLLLSRCLLSHA). 5 disulfide bridges follow: cysteine 42–cysteine 61, cysteine 50–cysteine 103, cysteine 60–cysteine 177, cysteine 111–cysteine 169, and cysteine 246–cysteine 280. N-linked (GlcNAc...) asparagine glycosylation is present at asparagine 52. Residues histidine 96, glutamate 162, and histidine 166 contribute to the active site.

Belongs to the RNase T2 family.

It localises to the vacuole lumen. The protein resides in the cytoplasm. It catalyses the reaction a ribonucleotidyl-ribonucleotide-RNA + H2O = a 3'-end 3'-phospho-ribonucleotide-RNA + a 5'-end dephospho-ribonucleoside-RNA + H(+). Functionally, rnase which modulates cell survival under stress conditions. Released from the vacuole to the cytoplasm during stress to promote tRNA and rRNA cleavage and to activate separately a downstream pathway that promotes cell death. Involved in cell size, vacuolar morphology and growth at high temperatures and high salt concentration. The polypeptide is Ribonuclease T2-like (RNY1) (Eremothecium gossypii (strain ATCC 10895 / CBS 109.51 / FGSC 9923 / NRRL Y-1056) (Yeast)).